A 148-amino-acid polypeptide reads, in one-letter code: Large ribosomal subunit protein bL9 (148 aa).

This sequence belongs to the bacterial ribosomal protein bL9 family.

Binds to the 23S rRNA. The chain is Large ribosomal subunit protein bL9 from Pseudomonas savastanoi pv. phaseolicola (strain 1448A / Race 6) (Pseudomonas syringae pv. phaseolicola (strain 1448A / Race 6)).